Reading from the N-terminus, the 477-residue chain is Ribulose bisphosphate carboxylase large chain (477 aa).

Residues 1–2 (MS) constitute a propeptide that is removed on maturation. An N-acetylproline modification is found at proline 3. Residue lysine 14 is modified to N6,N6,N6-trimethyllysine. 2 residues coordinate substrate: asparagine 123 and threonine 173. The active-site Proton acceptor is the lysine 175. Lysine 177 contacts substrate. The Mg(2+) site is built by lysine 201, aspartate 203, and glutamate 204. Lysine 201 is modified (N6-carboxylysine). Histidine 294 (proton acceptor) is an active-site residue. Residues arginine 295, histidine 327, and serine 379 each coordinate substrate.

This sequence belongs to the RuBisCO large chain family. Type I subfamily. In terms of assembly, heterohexadecamer of 8 large chains and 8 small chains; disulfide-linked. The disulfide link is formed within the large subunit homodimers. Mg(2+) serves as cofactor. Post-translationally, the disulfide bond which can form in the large chain dimeric partners within the hexadecamer appears to be associated with oxidative stress and protein turnover.

The protein localises to the plastid. The protein resides in the chloroplast. It catalyses the reaction 2 (2R)-3-phosphoglycerate + 2 H(+) = D-ribulose 1,5-bisphosphate + CO2 + H2O. The enzyme catalyses D-ribulose 1,5-bisphosphate + O2 = 2-phosphoglycolate + (2R)-3-phosphoglycerate + 2 H(+). Functionally, ruBisCO catalyzes two reactions: the carboxylation of D-ribulose 1,5-bisphosphate, the primary event in carbon dioxide fixation, as well as the oxidative fragmentation of the pentose substrate in the photorespiration process. Both reactions occur simultaneously and in competition at the same active site. The polypeptide is Ribulose bisphosphate carboxylase large chain (Nicotiana acuminata (Acuminate tobacco)).